A 406-amino-acid polypeptide reads, in one-letter code: Argininosuccinate synthase (406 aa).

ATP-binding positions include 12-20 (AYSGGLDTS) and A39. Residues Y90 and S95 each contribute to the L-citrulline site. G120 provides a ligand contact to ATP. L-aspartate-binding residues include T122, N126, and D127. N126 lines the L-citrulline pocket. L-citrulline contacts are provided by R130, S179, S188, E264, and Y276.

This sequence belongs to the argininosuccinate synthase family. Type 1 subfamily. As to quaternary structure, homotetramer.

The protein resides in the cytoplasm. It catalyses the reaction L-citrulline + L-aspartate + ATP = 2-(N(omega)-L-arginino)succinate + AMP + diphosphate + H(+). Its pathway is amino-acid biosynthesis; L-arginine biosynthesis; L-arginine from L-ornithine and carbamoyl phosphate: step 2/3. In Citrifermentans bemidjiense (strain ATCC BAA-1014 / DSM 16622 / JCM 12645 / Bem) (Geobacter bemidjiensis), this protein is Argininosuccinate synthase.